The chain runs to 131 residues: Holo-[acyl-carrier-protein] synthase (131 aa).

Mg(2+) is bound by residues Asp-8 and Glu-57.

The protein belongs to the P-Pant transferase superfamily. AcpS family. It depends on Mg(2+) as a cofactor.

The protein resides in the cytoplasm. It carries out the reaction apo-[ACP] + CoA = holo-[ACP] + adenosine 3',5'-bisphosphate + H(+). Its function is as follows. Transfers the 4'-phosphopantetheine moiety from coenzyme A to a Ser of acyl-carrier-protein. The polypeptide is Holo-[acyl-carrier-protein] synthase (Thiobacillus denitrificans (strain ATCC 25259 / T1)).